Consider the following 389-residue polypeptide: Chalcone synthase (389 aa).

Residue Cys164 is part of the active site.

This sequence belongs to the thiolase-like superfamily. Chalcone/stilbene synthases family.

It carries out the reaction (E)-4-coumaroyl-CoA + 3 malonyl-CoA + 3 H(+) = 2',4,4',6'-tetrahydroxychalcone + 3 CO2 + 4 CoA. Its pathway is secondary metabolite biosynthesis; flavonoid biosynthesis. Its function is as follows. The primary product of this enzyme is 4,2',4',6'-tetrahydroxychalcone (also termed naringenin-chalcone or chalcone) which can under specific conditions spontaneously isomerize into naringenin. This chain is Chalcone synthase (CHS), found in Pueraria montana var. lobata (Kudzu vine).